The primary structure comprises 373 residues: ATP phosphoribosyltransferase regulatory subunit (373 aa).

This sequence belongs to the class-II aminoacyl-tRNA synthetase family. HisZ subfamily. In terms of assembly, heteromultimer composed of HisG and HisZ subunits.

It localises to the cytoplasm. It functions in the pathway amino-acid biosynthesis; L-histidine biosynthesis; L-histidine from 5-phospho-alpha-D-ribose 1-diphosphate: step 1/9. Functionally, required for the first step of histidine biosynthesis. May allow the feedback regulation of ATP phosphoribosyltransferase activity by histidine. The protein is ATP phosphoribosyltransferase regulatory subunit of Chelativorans sp. (strain BNC1).